The chain runs to 596 residues: Choline dehydrogenase, mitochondrial (596 aa).

The N-terminal 34 residues, 1–34, are a transit peptide targeting the mitochondrion; sequence MWQVLRGWRKGWQSPRGALAWAVQGQPCPPCSRA. Residue 44-73 coordinates FAD; it reads TFVVVGAGSAGCVLASRLTEDPNHRVLLLE. An N6-succinyllysine modification is found at lysine 438. N6-acetyllysine; alternate is present on residues lysine 486 and lysine 498. N6-succinyllysine; alternate occurs at positions 486 and 498. Catalysis depends on histidine 513, which acts as the Proton acceptor. Position 582 is an N6-acetyllysine (lysine 582).

The protein belongs to the GMC oxidoreductase family. It depends on FAD as a cofactor. In terms of processing, acetylation of Lys-498 is observed in liver mitochondria from fasted mice but not from fed mice.

The protein localises to the mitochondrion inner membrane. The catalysed reaction is choline + A = betaine aldehyde + AH2. It functions in the pathway amine and polyamine biosynthesis; betaine biosynthesis via choline pathway; betaine aldehyde from choline (cytochrome c reductase route): step 1/1. The polypeptide is Choline dehydrogenase, mitochondrial (Chdh) (Mus musculus (Mouse)).